The sequence spans 101 residues: Protein Tat (101 aa).

The segment at 1-24 (MEPVDPNLEPWKHPGSQPRTACNN) is interaction with human CREBBP. Positions 1-48 (MEPVDPNLEPWKHPGSQPRTACNNCYCKKCCFHCYACFTRKGLGISYG) are transactivation. Zn(2+)-binding residues include C22, C25, and C27. Residues 22 to 37 (CNNCYCKKCCFHCYAC) are cysteine-rich. An N6-acetyllysine; by host PCAF modification is found at K28. Residues C30, H33, C34, and C37 each contribute to the Zn(2+) site. The segment at 38–48 (FTRKGLGISYG) is core. Over residues 48–57 (GRKKRRQRRR) the composition is skewed to basic residues. The interval 48–101 (GRKKRRQRRRAPQDSQTHQASLSKQPASQSRGDPTGPTESKKKVERETETDPFD) is disordered. A Nuclear localization signal, RNA-binding (TAR), and protein transduction motif is present at residues 49–57 (RKKRRQRRR). The segment at 49–86 (RKKRRQRRRAPQDSQTHQASLSKQPASQSRGDPTGPTE) is interaction with the host capping enzyme RNGTT. Residues K50 and K51 each carry the N6-acetyllysine; by host EP300 and GCN5L2 modification. R52 and R53 each carry asymmetric dimethylarginine; by host PRMT6. A compositionally biased stretch (polar residues) spans 60-79 (QDSQTHQASLSKQPASQSRG). Residue K71 forms a Glycyl lysine isopeptide (Lys-Gly) (interchain with G-Cter in ubiquitin) linkage. The Cell attachment site signature appears at 78-80 (RGD). A compositionally biased stretch (basic and acidic residues) spans 86–101 (ESKKKVERETETDPFD).

It belongs to the lentiviruses Tat family. As to quaternary structure, interacts with host CCNT1. Associates with the P-TEFb complex composed at least of Tat, P-TEFb (CDK9 and CCNT1), TAR RNA, RNA Pol II. Recruits the HATs CREBBP, TAF1/TFIID, EP300, PCAF and GCN5L2. Interacts with host KAT5/Tip60; this interaction targets the latter to degradation. Interacts with the host deacetylase SIRT1. Interacts with host capping enzyme RNGTT; this interaction stimulates RNGTT. Binds to host KDR, and to the host integrins ITGAV/ITGB3 and ITGA5/ITGB1. Interacts with host KPNB1/importin beta-1 without previous binding to KPNA1/importin alpha-1. Interacts with EIF2AK2. Interacts with host nucleosome assembly protein NAP1L1; this interaction may be required for the transport of Tat within the nucleus, since the two proteins interact at the nuclear rim. Interacts with host C1QBP/SF2P32; this interaction involves lysine-acetylated Tat. Interacts with the host chemokine receptors CCR2, CCR3 and CXCR4. Interacts with host DPP4/CD26; this interaction may trigger an anti-proliferative effect. Interacts with host LDLR. Interacts with the host extracellular matrix metalloproteinase MMP1. Interacts with host PRMT6; this interaction mediates Tat's methylation. Interacts with, and is ubiquitinated by MDM2/Hdm2. Interacts with host PSMC3 and HTATIP2. Interacts with STAB1; this interaction may overcome SATB1-mediated repression of IL2 and IL2RA (interleukin) in T cells by binding to the same domain than HDAC1. Interacts (when acetylated) with human CDK13, thereby increasing HIV-1 mRNA splicing and promoting the production of the doubly spliced HIV-1 protein Nef. Interacts with host TBP; this interaction modulates the activity of transcriptional pre-initiation complex. Interacts with host RELA. Interacts with host PLSCR1; this interaction negatively regulates Tat transactivation activity by altering its subcellular distribution. Post-translationally, asymmetrical arginine methylation by host PRMT6 seems to diminish the transactivation capacity of Tat and affects the interaction with host CCNT1. In terms of processing, acetylation by EP300, CREBBP, GCN5L2/GCN5 and PCAF regulates the transactivation activity of Tat. EP300-mediated acetylation of Lys-50 promotes dissociation of Tat from the TAR RNA through the competitive binding to PCAF's bromodomain. In addition, the non-acetylated Tat's N-terminus can also interact with PCAF. PCAF-mediated acetylation of Lys-28 enhances Tat's binding to CCNT1. Lys-50 is deacetylated by SIRT1. Polyubiquitination by host MDM2 does not target Tat to degradation, but activates its transactivation function and fosters interaction with CCNT1 and TAR RNA. Post-translationally, phosphorylated by EIF2AK2 on serine and threonine residues adjacent to the basic region important for TAR RNA binding and function. Phosphorylation of Tat by EIF2AK2 is dependent on the prior activation of EIF2AK2 by dsRNA.

It localises to the host nucleus. Its subcellular location is the host nucleolus. The protein localises to the host cytoplasm. The protein resides in the secreted. Its function is as follows. Transcriptional activator that increases RNA Pol II processivity, thereby increasing the level of full-length viral transcripts. Recognizes a hairpin structure at the 5'-LTR of the nascent viral mRNAs referred to as the transactivation responsive RNA element (TAR) and recruits the cyclin T1-CDK9 complex (P-TEFb complex) that will in turn hyperphosphorylate the RNA polymerase II to allow efficient elongation. The CDK9 component of P-TEFb and other Tat-activated kinases hyperphosphorylate the C-terminus of RNA Pol II that becomes stabilized and much more processive. Other factors such as HTATSF1/Tat-SF1, SUPT5H/SPT5, and HTATIP2 are also important for Tat's function. Besides its effect on RNA Pol II processivity, Tat induces chromatin remodeling of proviral genes by recruiting the histone acetyltransferases (HATs) CREBBP, EP300 and PCAF to the chromatin. This also contributes to the increase in proviral transcription rate, especially when the provirus integrates in transcriptionally silent region of the host genome. To ensure maximal activation of the LTR, Tat mediates nuclear translocation of NF-kappa-B by interacting with host RELA. Through its interaction with host TBP, Tat may also modulate transcription initiation. Tat can reactivate a latently infected cell by penetrating in it and transactivating its LTR promoter. In the cytoplasm, Tat is thought to act as a translational activator of HIV-1 mRNAs. Functionally, extracellular circulating Tat can be endocytosed by surrounding uninfected cells via the binding to several surface receptors such as CD26, CXCR4, heparan sulfate proteoglycans (HSPG) or LDLR. Neurons are rarely infected, but they internalize Tat via their LDLR. Through its interaction with nuclear HATs, Tat is potentially able to control the acetylation-dependent cellular gene expression. Modulates the expression of many cellular genes involved in cell survival, proliferation or in coding for cytokines or cytokine receptors. Tat plays a role in T-cell and neurons apoptosis. Tat induced neurotoxicity and apoptosis probably contribute to neuroAIDS. Circulating Tat also acts as a chemokine-like and/or growth factor-like molecule that binds to specific receptors on the surface of the cells, affecting many cellular pathways. In the vascular system, Tat binds to ITGAV/ITGB3 and ITGA5/ITGB1 integrins dimers at the surface of endothelial cells and competes with bFGF for heparin-binding sites, leading to an excess of soluble bFGF. The sequence is that of Protein Tat from Homo sapiens (Human).